The chain runs to 126 residues: MAISKEEVLDYIGNLSVLELSELVKAFEEKFGVSAAPTVVAGAVAGGAGGGAAAEEKTDFNVVLVDAGANKINVIKAVREITGLGLKEAKDATEQTPSTLKEGVSKEDAENFKKKLEEAGAKVEIK.

Belongs to the bacterial ribosomal protein bL12 family. As to quaternary structure, homodimer. Part of the ribosomal stalk of the 50S ribosomal subunit. Forms a multimeric L10(L12)X complex, where L10 forms an elongated spine to which 2 to 4 L12 dimers bind in a sequential fashion. Binds GTP-bound translation factors.

In terms of biological role, forms part of the ribosomal stalk which helps the ribosome interact with GTP-bound translation factors. Is thus essential for accurate translation. This chain is Large ribosomal subunit protein bL12, found in Helicobacter hepaticus (strain ATCC 51449 / 3B1).